Reading from the N-terminus, the 307-residue chain is Estrogen receptor (307 aa).

Residues 1 to 43 (GHNDYMCPATNQCTIDKNRRKSCQACRLRKCYEVGMMKGGIRK) constitute a DNA-binding region (nuclear receptor). Residues 7–31 (CPATNQCTIDKNRRKSCQACRLRKC) form an NR C4-type zinc finger. Residues 44–95 (DRRGGRILKHKRQREEHDNRNAGAIVERRSPNLWPSPLMITHNKKNSPALSL) form a hinge region. One can recognise an NR LBD domain in the interval 96–307 (TADQIVSALL…HFRHMSNKGM (212 aa)).

This sequence belongs to the nuclear hormone receptor family. NR3 subfamily. As to quaternary structure, binds DNA as a homodimer. Can form a heterodimer with ER-beta.

The protein localises to the nucleus. The steroid hormones and their receptors are involved in the regulation of eukaryotic gene expression and affect cellular proliferation and differentiation in target tissues. The sequence is that of Estrogen receptor (ESR1) from Aspidoscelis uniparens (Desert grassland whiptail lizard).